The sequence spans 473 residues: H(+)/Cl(-) exchange transporter ClcA (473 aa).

Residues 1-32 (MKTDTPSLETPQAARLRRRQLIRQLLERDKTP) are Cytoplasmic-facing. Residues 33 to 69 (LAILFMAAVVGTLVGLAAVAFDKGVAWLQNQRMGALV) traverse the membrane as a helical segment. At 70-76 (HTADNYP) the chain is on the periplasmic side. Residues 77–100 (LLLTVAFLCSAVLAMFGYFLVRKY) traverse the membrane as a helical segment. A Selectivity filter part_1 motif is present at residues 106–110 (GSGIP). Position 107 (S107) interacts with chloride. An intramembrane region (helical) is located at residues 109–116 (IPEIEGAL). The Cytoplasmic portion of the chain corresponds to 117-123 (EDQRPVR). 2 helical membrane-spanning segments follow: residues 124–141 (WWRVLPVKFFGGLGTLGG) and 148–166 (EGPTVQIGGNIGRMVLDVF). The short motif at 146 to 150 (GREGP) is the Selectivity filter part_2 element. Residues 167 to 176 (RLKGDEARHT) lie on the Cytoplasmic side of the membrane. Intramembrane regions (helical) lie at residues 177 to 189 (LLATGAAAGLAAA) and 193 to 201 (PLAGILFII). Over 202-214 (EEMRPQFRYTLIS) the chain is Cytoplasmic. The chain crosses the membrane as a helical span at residues 215-232 (IKAVFIGVIMSTIMYRIF). Topologically, residues 233–252 (NHEVALIDVGKLSDAPLNTL) are periplasmic. A helical membrane pass occupies residues 253 to 281 (WLYLILGIIFGIFGPIFNKWVLGMQDLLH). Topologically, residues 282 to 287 (RVHGGN) are cytoplasmic. A helical membrane pass occupies residues 288–309 (ITKWVLMGGAIGGLCGLLGFVA). Over 310–329 (PATSGGGFNLIPIATAGNFS) the chain is Periplasmic. The next 2 helical transmembrane spans lie at 330-349 (MGMLVFIFVARVITTLLCFS) and 355-376 (GIFAPMLALGTVLGTAFGMVAV). The short motif at 355 to 359 (GIFAP) is the Selectivity filter part_3 element. Chloride-binding residues include I356 and F357. Residues 377 to 386 (ELFPQYHLEA) are Periplasmic-facing. The segment at residues 387-401 (GTFAIAGMGALLAAS) is an intramembrane region (helical). The note=Loop between two helices intramembrane region spans 402–404 (IRA). The helical intramembrane region spans 405–416 (PLTGIILVLEMT). The segment at residues 417 to 421 (DNYQL) is an intramembrane region (note=Loop between two helices). The chain crosses the membrane as a helical span at residues 422 to 438 (ILPMIITGLGATLLAQF). Topologically, residues 439–473 (TGGKPLYSAILARTLAKQEAEQLARSKAASARENT) are cytoplasmic. Y445 is a binding site for chloride.

The protein belongs to the chloride channel (TC 2.A.49) family. ClcA subfamily. As to quaternary structure, homodimer.

It localises to the cell inner membrane. It catalyses the reaction 2 chloride(in) + H(+)(out) = 2 chloride(out) + H(+)(in). Its function is as follows. Proton-coupled chloride transporter. Functions as antiport system and exchanges two chloride ions for 1 proton. Probably acts as an electrical shunt for an outwardly-directed proton pump that is linked to amino acid decarboxylation, as part of the extreme acid resistance (XAR) response. The chain is H(+)/Cl(-) exchange transporter ClcA from Escherichia coli O45:K1 (strain S88 / ExPEC).